Consider the following 172-residue polypeptide: C-phycocyanin beta chain (172 aa).

At Asn72 the chain carries N4-methylasparagine. The (2R,3E)-phycocyanobilin site is built by Cys82 and Cys153.

Belongs to the phycobiliprotein family. In terms of assembly, heterodimer of an alpha and a beta subunit, which further assembles into trimers and the trimers into hexamers. The basic functional unit of phycobiliproteins is a ring-shaped hexamer formed from two back-to-back trimers contacting via the alpha chain subunits. The trimers are composed of alpha/beta subunit heterodimers arranged around a three-fold axis of symmetry. The phycoerythrins also contain a gamma subunit which is located in the center of the hexamer. Contains two covalently linked bilin chromophores.

The protein localises to the plastid. It localises to the chloroplast thylakoid membrane. Light-harvesting photosynthetic bile pigment-protein from the phycobiliprotein complex (phycobilisome, PBS). Phycocyanin is the major phycobiliprotein in the PBS rod. The sequence is that of C-phycocyanin beta chain (cpcB) from Pyropia yezoensis (Susabi-nori).